We begin with the raw amino-acid sequence, 510 residues long: Bifunctional purine biosynthesis protein PurH (510 aa).

An MGS-like domain is found at 1–142 (MRALLSVSDK…KNYKDVMVLC (142 aa)).

This sequence belongs to the PurH family.

The catalysed reaction is (6R)-10-formyltetrahydrofolate + 5-amino-1-(5-phospho-beta-D-ribosyl)imidazole-4-carboxamide = 5-formamido-1-(5-phospho-D-ribosyl)imidazole-4-carboxamide + (6S)-5,6,7,8-tetrahydrofolate. It carries out the reaction IMP + H2O = 5-formamido-1-(5-phospho-D-ribosyl)imidazole-4-carboxamide. It functions in the pathway purine metabolism; IMP biosynthesis via de novo pathway; 5-formamido-1-(5-phospho-D-ribosyl)imidazole-4-carboxamide from 5-amino-1-(5-phospho-D-ribosyl)imidazole-4-carboxamide (10-formyl THF route): step 1/1. It participates in purine metabolism; IMP biosynthesis via de novo pathway; IMP from 5-formamido-1-(5-phospho-D-ribosyl)imidazole-4-carboxamide: step 1/1. In Campylobacter jejuni subsp. jejuni serotype O:2 (strain ATCC 700819 / NCTC 11168), this protein is Bifunctional purine biosynthesis protein PurH.